Here is a 309-residue protein sequence, read N- to C-terminus: Protein FdhE (309 aa).

This sequence belongs to the FdhE family.

It localises to the cytoplasm. In terms of biological role, necessary for formate dehydrogenase activity. This Escherichia coli O9:H4 (strain HS) protein is Protein FdhE.